The following is a 317-amino-acid chain: Mitochondrial thiamine pyrophosphate carrier 1 (317 aa).

A run of 6 helical transmembrane segments spans residues 15-37, 80-100, 118-138, 168-190, 205-227, and 281-300; these read TVSWYNSVIAGSVSGVFARMATA, IPATAMYVVYGAVQFGSYSWF, LTVGALAGMTSSVVSYPLDLL, GFFTGISTAMTTVTLSTAIMFLT, FWSRPVSASSGIIAGFVSKTMVF, and GLTMGLCKSVPTTAISLFVY. Solcar repeat units follow at residues 16-103, 112-197, and 206-306; these read VSWY…FNNV, SQQG…VNIV, and WSRP…TMDL.

It belongs to the mitochondrial carrier (TC 2.A.29) family.

The protein resides in the mitochondrion inner membrane. Its function is as follows. Mitochondrial transporter that mediates uptake of thiamine pyrophosphate (ThPP) into mitochondria. The polypeptide is Mitochondrial thiamine pyrophosphate carrier 1 (TPC1) (Kluyveromyces lactis (strain ATCC 8585 / CBS 2359 / DSM 70799 / NBRC 1267 / NRRL Y-1140 / WM37) (Yeast)).